The following is a 249-amino-acid chain: uncharacterized protein (249 aa).

The signal sequence occupies residues 1–25 (MRYLNTKNIIAAGVLLSCMSSIAWG).

Belongs to the periplasmic pilus chaperone family.

The protein resides in the periplasm. Could be required for the biogenesis of a putative fimbria. This is an uncharacterized protein from Escherichia coli (strain K12).